The chain runs to 345 residues: Phosphoribosylformylglycinamidine cyclo-ligase (345 aa).

The protein belongs to the AIR synthase family.

It is found in the cytoplasm. It catalyses the reaction 2-formamido-N(1)-(5-O-phospho-beta-D-ribosyl)acetamidine + ATP = 5-amino-1-(5-phospho-beta-D-ribosyl)imidazole + ADP + phosphate + H(+). It functions in the pathway purine metabolism; IMP biosynthesis via de novo pathway; 5-amino-1-(5-phospho-D-ribosyl)imidazole from N(2)-formyl-N(1)-(5-phospho-D-ribosyl)glycinamide: step 2/2. The protein is Phosphoribosylformylglycinamidine cyclo-ligase of Histophilus somni (strain 129Pt) (Haemophilus somnus).